An 87-amino-acid chain; its full sequence is Putative membrane protein insertion efficiency factor (87 aa).

Belongs to the UPF0161 family.

It is found in the cell membrane. In terms of biological role, could be involved in insertion of integral membrane proteins into the membrane. This is Putative membrane protein insertion efficiency factor from Ligilactobacillus salivarius (strain UCC118) (Lactobacillus salivarius).